The following is a 614-amino-acid chain: MIKKYWFLMVYSVTAFSVWAQDTPLDTLVVTANRFQEPLSTVLAPVTIVTREDIDRWQVSSVNDVLRRLPGVAISQHGGEGQLSTIFVRGTNSNHTLVLIDGVRLNLAGVSGAADLSQFPVALVQRIEYIRGPRSAIYGSDAIGGVINIITSRENTGTEISAGWGSNSYQHYDISTHQQLGENTRVTLLGDYTYTRGFDAVAYGSTGMQPQSDRDGFLSKTFYGKLEHNLSDTWSGFVRGYGYNNRTKYDAWYSPGSPLIDTRKLYSQSWDAGLRYAGETLQSQLVSSYSHSKDYNYDPHYGRYDTSANLDDMKQYNLQWTNSVTVGHGNVGAGIDWQKQSTTPGTGYLPKGYDQRNTGIYLTGLQKLGDFTLEGAVRNDDNSQFERHTTWQSSAGWEFIEGYRFIASYGTAFKAPNLGQLYGMYGNPNLAPEKSKQWEGAFEGLTGGVNWRISGYRNDISEMINYNPHTLRYYNDGKVHVKGIEATVNFDTGALTHTVSYDYTDARNALTDKPLERRPKLQVKYQLDWQVFDFDWGITYQYMGSRYDSDYSSWPYKSVKMGGVSLWDVAVAYPVTPHLIVRGKIANLFNKDYETGYGYQAAGREYILSGSYTF.

The signal sequence occupies residues 1-20; it reads MIKKYWFLMVYSVTAFSVWA. The TonB box signature appears at 26 to 33; the sequence is DTLVVTAN. The TBDR plug domain occupies 38 to 152; the sequence is PLSTVLAPVT…IGGVINIITS (115 aa). Residues Leu83, Thr85, Asn92, and 110 to 111 each bind cyanocob(III)alamin; that span reads VS. In terms of domain architecture, TBDR beta-barrel spans 155–614; it reads NTGTEISAGW…EYILSGSYTF (460 aa). Beta stranded transmembrane passes span 158–165, 169–178, and 184–195; these read TEISAGWG, YQHYDISTHQ, and TRVTLLGDYTYT. Ca(2+) is bound by residues Asp199, Gln211, Asp213, and Asp215. 2 beta stranded membrane-spanning segments follow: residues 217–227 and 232–248; these read FLSKTFYGKLE and DTWSGFVRGYGYNNRTK. Tyr249 and Asp250 together coordinate Ca(2+). Ala251 serves as a coordination point for cyanocob(III)alamin. Asp261 provides a ligand contact to Ca(2+). The next 14 membrane-spanning stretches (beta stranded) occupy residues 263 to 277, 279 to 296, 309 to 325, 328 to 337, 353 to 369, 371 to 381, 385 to 400, 403 to 417, 434 to 443, 449 to 458, 473 to 490, 494 to 509, 517 to 529, and 535 to 550; these read RKLYSQSWDAGLRYA, ETLQSQLVSSYSHSKDYN, NLDDMKQYNLQWTNSVT, HGNVGAGIDW, YDQRNTGIYLTGLQKLG, FTLEGAVRNDD, FERHTTWQSSAGWEFI, YRFIASYGTAFKAPN, KSKQWEGAFE, VNWRISGYRN, YYNDGKVHVKGIEATVNF, ALTHTVSYDYTDARNA, RRPKLQVKYQLDW, and DWGITYQYMGSRYDSD. Position 517 (Arg517) interacts with cyanocob(III)alamin. Cyanocob(III)alamin is bound at residue Tyr551. Transmembrane regions (beta stranded) follow at residues 558–572, 585–596, and 602–614; these read SVKMGGVSLWDVAVA, IANLFNKDYETG, and AGREYILSGSYTF. Positions 597–614 match the TonB C-terminal box motif; sequence YGYQAAGREYILSGSYTF.

Belongs to the TonB-dependent receptor family. BtuB (TC 1.B.14.3.1) subfamily.

It localises to the cell outer membrane. In terms of biological role, involved in the active translocation of vitamin B12 (cyanocobalamin) across the outer membrane to the periplasmic space. It derives its energy for transport by interacting with the trans-periplasmic membrane protein TonB. The sequence is that of Vitamin B12 transporter BtuB (btuB) from Escherichia coli.